A 418-amino-acid chain; its full sequence is Glutamyl-tRNA reductase (418 aa).

Substrate-binding positions include 49–52, Ser-109, 114–116, and Gln-120; these read TCNR and EPQ. Cys-50 (nucleophile) is an active-site residue. 189–194 provides a ligand contact to NADP(+); it reads GAGETI.

This sequence belongs to the glutamyl-tRNA reductase family. Homodimer.

The enzyme catalyses (S)-4-amino-5-oxopentanoate + tRNA(Glu) + NADP(+) = L-glutamyl-tRNA(Glu) + NADPH + H(+). It functions in the pathway porphyrin-containing compound metabolism; protoporphyrin-IX biosynthesis; 5-aminolevulinate from L-glutamyl-tRNA(Glu): step 1/2. Its function is as follows. Catalyzes the NADPH-dependent reduction of glutamyl-tRNA(Glu) to glutamate 1-semialdehyde (GSA). The protein is Glutamyl-tRNA reductase of Pectobacterium atrosepticum (strain SCRI 1043 / ATCC BAA-672) (Erwinia carotovora subsp. atroseptica).